Consider the following 182-residue polypeptide: Biotin transporter BioY2 (182 aa).

The next 5 membrane-spanning stretches (helical) occupy residues 12-32 (IALG…IGIV), 54-74 (FFAI…FTGG), 78-98 (IAVL…MGTL), 111-131 (IPAF…GTLW), and 150-170 (PFVF…LALI).

The protein belongs to the BioY family. As to quaternary structure, in E.coli forms a stable energy-coupling factor (ECF) transporter complex composed of 2 membrane-embedded substrate-binding protein (S component), 2 ATP-binding proteins (A and A' components) and 2 transmembrane proteins (T component), probably with a stoichiometry of 2:1:1:2. May be able to interact with more than 1 S component at a time.

Its subcellular location is the cell membrane. Probably a biotin-binding protein that interacts with the energy-coupling factor (ECF) ABC-transporter complex. Unlike classic ABC transporters this ECF transporter provides the energy necessary to transport a number of different substrates. The substrates themselves are bound by transmembrane, not extracytoplasmic soluble proteins. This is Biotin transporter BioY2 (bioY2) from Lactococcus lactis subsp. cremoris (strain MG1363).